Here is a 126-residue protein sequence, read N- to C-terminus: Follitropin subunit beta (126 aa).

Positions 1-19 (MKLIQLCILFWCWRAICCQ) are cleaved as a signal peptide. Intrachain disulfides connect Cys21-Cys69, Cys35-Cys84, Cys38-Cys122, Cys46-Cys100, Cys50-Cys102, and Cys105-Cys112. 2 N-linked (GlcNAc...) asparagine glycosylation sites follow: Asn25 and Asn42.

The protein belongs to the glycoprotein hormones subunit beta family. Heterodimer. The active follitropin is a heterodimer composed of an alpha chain/CGA shared with other hormones and a unique beta chain/FSHB shown here.

The protein resides in the secreted. In terms of biological role, together with the alpha chain CGA constitutes follitropin, the follicle-stimulating hormone, and provides its biological specificity to the hormone heterodimer. Binds FSHR, a G protein-coupled receptor, on target cells to activate downstream signaling pathways. Follitropin is involved in follicle development and spermatogenesis in reproductive organs. The chain is Follitropin subunit beta (FSHB) from Phodopus sungorus (Striped hairy-footed hamster).